We begin with the raw amino-acid sequence, 257 residues long: Acetylglutamate kinase (257 aa).

Residues 43–44, arginine 65, and asparagine 157 contribute to the substrate site; that span reads GG. Residues 180 to 185 and 208 to 210 contribute to the ATP site; these read DVSGIL and IIT.

This sequence belongs to the acetylglutamate kinase family. ArgB subfamily. In terms of assembly, homodimer.

The protein localises to the cytoplasm. The catalysed reaction is N-acetyl-L-glutamate + ATP = N-acetyl-L-glutamyl 5-phosphate + ADP. It participates in amino-acid biosynthesis; L-arginine biosynthesis; N(2)-acetyl-L-ornithine from L-glutamate: step 2/4. Catalyzes the ATP-dependent phosphorylation of N-acetyl-L-glutamate. This is Acetylglutamate kinase from Edwardsiella ictaluri (strain 93-146).